Reading from the N-terminus, the 521-residue chain is MPTDPNSNPVSKAGLTPSSINSNISEVQPTTGLNTINAAAGVKVKETENLRANFTAKSSLPAGSEITCTPQSSPLLSSTPPTVSKSLIKAYPYLIALNKILGVLTWTDDTSYISVLLVTTATLFILYFENFVIYLGHLSIVGLIFLYSIFRSYVEKEQKKSPTLDDVVHCLTTVSVRADMLLFPVSSLNLTSADLRRLLFTSIFLSPGYILVCYLLFPPKTLLLILVIFFLTYHSSWSRVTRKLLWRSSIVRAFCFYNTGLIFESGNNEKSSLFKTAMNKTNKKLKEVTRKAGGKHSGPVRFTYVLYENQRRWLGVGWTPNLLSYERTPWTDEFLNEAESPDNFELPQLNDDSGMYWRWIDKTWRLDLTNDGALQLPSSKYKTTADPKPDEGFIYYDNTWKNPSTEDSFSKYTRRRRWIRTAELVSPGDDSSTDSASLPHSASETVGLTLPKSTSISDVQSVNASGNITTSAETAPDSAGTAKKRKSLRFDATSTVYEEGVSDLKNVKETLEGGATDKKEE.

A disordered region spans residues 1-26; that stretch reads MPTDPNSNPVSKAGLTPSSINSNISE. Asparagine 23 and asparagine 53 each carry an N-linked (GlcNAc...) asparagine glycan. The next 2 membrane-spanning stretches (helical) occupy residues 111 to 128 and 133 to 150; these read SYIS…ILYF and IYLG…YSIF. N-linked (GlcNAc...) asparagine glycosylation occurs at asparagine 189. The helical transmembrane segment at 198-217 threads the bilayer; the sequence is LLFTSIFLSPGYILVCYLLF. Asparagine 279 carries N-linked (GlcNAc...) asparagine glycosylation. Positions 425–446 are disordered; that stretch reads VSPGDDSSTDSASLPHSASETV. Residues 429–446 show a composition bias toward polar residues; the sequence is DDSSTDSASLPHSASETV. 2 N-linked (GlcNAc...) asparagine glycosylation sites follow: asparagine 463 and asparagine 467. A disordered region spans residues 465 to 486; that stretch reads SGNITTSAETAPDSAGTAKKRK.

The protein belongs to the PEX28-32 family. PEX32 subfamily.

The protein resides in the endoplasmic reticulum membrane. Functionally, with PEX29, contributes to the formation of endoplasmic reticulum-mitochondria junctions which are important for mitochondrial function. Involved in lipid dropplets formation. The sequence is that of Peroxisomal membrane protein PEX23 from Ogataea parapolymorpha (strain ATCC 26012 / BCRC 20466 / JCM 22074 / NRRL Y-7560 / DL-1) (Yeast).